The following is a 163-amino-acid chain: Methyl-CpG-binding domain-containing protein 3 (163 aa).

Residues 6–56 form a CW-type zinc finger; it reads TTLIDSYAAQCWKCLKVRSIESQEDYEEIRSKTLEKFFECKRCEEPGDMVM. The 73-residue stretch at 65–137 folds into the MBD domain; that stretch reads WFQDEHSIPK…EEVSFAAPKR (73 aa). The segment at 140 to 163 is disordered; the sequence is LKKKPVDSHSSSRNTEEDGVSRDA. The segment covering 153–163 has biased composition (basic and acidic residues); that stretch reads NTEEDGVSRDA.

It is found in the nucleus. Probable transcriptional regulator. The polypeptide is Methyl-CpG-binding domain-containing protein 3 (MBD3) (Arabidopsis thaliana (Mouse-ear cress)).